Here is a 172-residue protein sequence, read N- to C-terminus: Adenine phosphoribosyltransferase (172 aa).

This sequence belongs to the purine/pyrimidine phosphoribosyltransferase family. As to quaternary structure, homodimer.

The protein resides in the cytoplasm. It carries out the reaction AMP + diphosphate = 5-phospho-alpha-D-ribose 1-diphosphate + adenine. It functions in the pathway purine metabolism; AMP biosynthesis via salvage pathway; AMP from adenine: step 1/1. In terms of biological role, catalyzes a salvage reaction resulting in the formation of AMP, that is energically less costly than de novo synthesis. In Parasynechococcus marenigrum (strain WH8102), this protein is Adenine phosphoribosyltransferase.